The primary structure comprises 337 residues: Phenylalanine--tRNA ligase alpha subunit (337 aa).

Residue Glu252 participates in Mg(2+) binding.

Belongs to the class-II aminoacyl-tRNA synthetase family. Phe-tRNA synthetase alpha subunit type 1 subfamily. As to quaternary structure, tetramer of two alpha and two beta subunits. Requires Mg(2+) as cofactor.

It is found in the cytoplasm. The catalysed reaction is tRNA(Phe) + L-phenylalanine + ATP = L-phenylalanyl-tRNA(Phe) + AMP + diphosphate + H(+). This chain is Phenylalanine--tRNA ligase alpha subunit, found in Cellvibrio japonicus (strain Ueda107) (Pseudomonas fluorescens subsp. cellulosa).